The primary structure comprises 430 residues: Probable ribosomal RNA small subunit methyltransferase B (430 aa).

S-adenosyl-L-methionine-binding positions include 246-252, Asp-270, Asp-299, and Asp-318; that span reads CAAPGSK. Cys-371 acts as the Nucleophile in catalysis.

It belongs to the class I-like SAM-binding methyltransferase superfamily. RsmB/NOP family.

The protein resides in the cytoplasm. The enzyme catalyses cytidine(967) in 16S rRNA + S-adenosyl-L-methionine = 5-methylcytidine(967) in 16S rRNA + S-adenosyl-L-homocysteine + H(+). In terms of biological role, specifically methylates the cytosine at position 967 (m5C967) of 16S rRNA. The chain is Probable ribosomal RNA small subunit methyltransferase B from Coxiella burnetii (strain RSA 493 / Nine Mile phase I).